A 268-amino-acid chain; its full sequence is L-aspartate dehydrogenase (268 aa).

Positions 125 and 191 each coordinate NAD(+). Residue His-221 is part of the active site.

The protein belongs to the L-aspartate dehydrogenase family.

It catalyses the reaction L-aspartate + NADP(+) + H2O = oxaloacetate + NH4(+) + NADPH + H(+). The enzyme catalyses L-aspartate + NAD(+) + H2O = oxaloacetate + NH4(+) + NADH + H(+). The protein operates within cofactor biosynthesis; NAD(+) biosynthesis; iminoaspartate from L-aspartate (dehydrogenase route): step 1/1. Its function is as follows. Specifically catalyzes the NAD or NADP-dependent dehydrogenation of L-aspartate to iminoaspartate. The chain is L-aspartate dehydrogenase from Ralstonia nicotianae (strain ATCC BAA-1114 / GMI1000) (Ralstonia solanacearum).